Reading from the N-terminus, the 444-residue chain is N-succinylarginine dihydrolase (444 aa).

Residues A19–S28, N110, and H137–R138 contribute to the substrate site. E174 is a catalytic residue. R214 serves as a coordination point for substrate. Residue H250 is part of the active site. The substrate site is built by D252 and N362. The Nucleophile role is filled by C368.

This sequence belongs to the succinylarginine dihydrolase family. As to quaternary structure, homodimer.

It carries out the reaction N(2)-succinyl-L-arginine + 2 H2O + 2 H(+) = N(2)-succinyl-L-ornithine + 2 NH4(+) + CO2. It participates in amino-acid degradation; L-arginine degradation via AST pathway; L-glutamate and succinate from L-arginine: step 2/5. Catalyzes the hydrolysis of N(2)-succinylarginine into N(2)-succinylornithine, ammonia and CO(2). The protein is N-succinylarginine dihydrolase of Shewanella sp. (strain ANA-3).